We begin with the raw amino-acid sequence, 59 residues long: Cecropin-A (59 aa).

Positions 1 to 23 (MNFNKLFVIVLLAALAFFGQAEA) are cleaved as a signal peptide. Leucine 57 bears the Leucine amide mark.

This sequence belongs to the cecropin family.

It localises to the secreted. Cecropins have lytic and antibacterial activity against several Gram-positive and Gram-negative bacteria. This is Cecropin-A (CECA) from Culex pipiens pipiens (Northern house mosquito).